The primary structure comprises 322 residues: MTLHLKKVELHCHLEGAAPPELTAAQARKYGVDISGELRGGAYVWHDFASFLECYDKVSEVYRTEEDYARLTETYLDELAGINTIYSELIVSPDHGKRIGLGADAYISGICEGIRRAREKSGIEARLIVTGERHFGPESVIGAAEYAAKAGNPLITGFNLAGEERMGRVADYARAFDIARDAGLGLTIHAGEVCGAFSVADALDAVHPSRIGHGVRAVEDVDLVKRLADLGTVLEVCPGSNIALGVFPDFASHPLRRLKEAGVRVTISSDDPPFFHTSLAREYELAAEAFGFSDAEIDAMTRTAIEAAFVDEETRKALLARL.

H11, H13, and H189 together coordinate Zn(2+). E192 acts as the Proton donor in catalysis. D270 is a Zn(2+) binding site. D271 contacts substrate.

This sequence belongs to the metallo-dependent hydrolases superfamily. Adenosine and AMP deaminases family. Adenine deaminase type 2 subfamily. Zn(2+) is required as a cofactor.

The enzyme catalyses adenine + H2O + H(+) = hypoxanthine + NH4(+). Catalyzes the hydrolytic deamination of adenine to hypoxanthine. Plays an important role in the purine salvage pathway and in nitrogen catabolism. The polypeptide is Adenine deaminase (Rhizobium leguminosarum bv. trifolii (strain WSM2304)).